A 286-amino-acid chain; its full sequence is Undecaprenyl-diphosphatase (286 aa).

7 helical membrane passes run 50-70 (GAAFTAITQLGTETAVIVYFW), 97-117 (MGWLVILGSLPIIVLGLIFQD), 126-146 (LWIVATMLIVFGLILAVADAV), 156-176 (LTYKHGIFYGFAQAMALIPGV), 200-220 (SFLLAIPAVFGSGLYQLYKVM), 236-256 (LATLIAFVVGYVIIGWFLKFV), and 264-284 (FVWYRIFLGLALYLLLGFNVI).

This sequence belongs to the UppP family.

The protein localises to the cell membrane. It carries out the reaction di-trans,octa-cis-undecaprenyl diphosphate + H2O = di-trans,octa-cis-undecaprenyl phosphate + phosphate + H(+). Functionally, catalyzes the dephosphorylation of undecaprenyl diphosphate (UPP). Confers resistance to bacitracin. The protein is Undecaprenyl-diphosphatase of Arthrobacter sp. (strain FB24).